A 428-amino-acid chain; its full sequence is C4-dicarboxylate transport protein (428 aa).

8 helical membrane passes run 8 to 28 (SLYF…HFYP), 44 to 64 (LIKM…IAGM), 76 to 96 (VALL…LIIV), 142 to 162 (IGAF…LFGF), 184 to 204 (VIFG…FGAM), 222 to 242 (LIIC…GSIA), 326 to 346 (IVHQ…AAGV), and 352 to 372 (IVLA…LALI).

The protein belongs to the dicarboxylate/amino acid:cation symporter (DAACS) (TC 2.A.23) family.

Its subcellular location is the cell inner membrane. Functionally, responsible for the transport of dicarboxylates such as succinate, fumarate, and malate from the periplasm across the membrane. The protein is C4-dicarboxylate transport protein of Shigella dysenteriae serotype 1 (strain Sd197).